The primary structure comprises 351 residues: Small ribosomal subunit biogenesis GTPase RsgA (351 aa).

Positions 1-12 (MAKHKLSKGQQR) are enriched in basic residues. A disordered region spans residues 1–37 (MAKHKLSKGQQRRVRENHQRRLKKQDNKPEMDDNQLG). The span at 13–31 (RVRENHQRRLKKQDNKPEM) shows a compositional bias: basic and acidic residues. One can recognise a CP-type G domain in the interval 112–274 (YYDGIKPIAA…VIDSPGVREF (163 aa)). GTP-binding positions include 160–163 (NKID) and 214–222 (GQSGVGKSS). Residues Cys-298, Cys-303, His-305, and Cys-311 each coordinate Zn(2+).

The protein belongs to the TRAFAC class YlqF/YawG GTPase family. RsgA subfamily. As to quaternary structure, monomer. Associates with 30S ribosomal subunit, binds 16S rRNA. The cofactor is Zn(2+).

The protein resides in the cytoplasm. One of several proteins that assist in the late maturation steps of the functional core of the 30S ribosomal subunit. Helps release RbfA from mature subunits. May play a role in the assembly of ribosomal proteins into the subunit. Circularly permuted GTPase that catalyzes slow GTP hydrolysis, GTPase activity is stimulated by the 30S ribosomal subunit. This Photorhabdus laumondii subsp. laumondii (strain DSM 15139 / CIP 105565 / TT01) (Photorhabdus luminescens subsp. laumondii) protein is Small ribosomal subunit biogenesis GTPase RsgA.